A 560-amino-acid polypeptide reads, in one-letter code: Protein SINE1 (560 aa).

Position 2 is an N-acetylglycine (glycine 2). Residues 7–287 (PILRQELANL…VRGAAYEAMM (281 aa)) are ARMADILLO-type fold. One can recognise a KASH domain in the interval 517–560 (KKKKKKMSYAKLVIAISFVVVALFATVILMVNQDDDVGYYTVPT). A helical transmembrane segment spans residues 528–548 (LVIAISFVVVALFATVILMVN). The Required for nuclear localization motif lies at 557–560 (TVPT).

As to quaternary structure, interacts with SUN1 and SUN2. Binds to F-actin. Preferentially expressed in guards cells, but also detected in root cells.

The protein localises to the nucleus membrane. Its function is as follows. Plays a role in nucleus positioning in guard cells. The sequence is that of Protein SINE1 from Arabidopsis thaliana (Mouse-ear cress).